The chain runs to 232 residues: Enolase-phosphatase E1 (232 aa).

This sequence belongs to the HAD-like hydrolase superfamily. MasA/MtnC family. As to quaternary structure, monomer. Requires Mg(2+) as cofactor.

The catalysed reaction is 5-methylsulfanyl-2,3-dioxopentyl phosphate + H2O = 1,2-dihydroxy-5-(methylsulfanyl)pent-1-en-3-one + phosphate. It functions in the pathway amino-acid biosynthesis; L-methionine biosynthesis via salvage pathway; L-methionine from S-methyl-5-thio-alpha-D-ribose 1-phosphate: step 3/6. The protein operates within amino-acid biosynthesis; L-methionine biosynthesis via salvage pathway; L-methionine from S-methyl-5-thio-alpha-D-ribose 1-phosphate: step 4/6. In terms of biological role, bifunctional enzyme that catalyzes the enolization of 2,3-diketo-5-methylthiopentyl-1-phosphate (DK-MTP-1-P) into the intermediate 2-hydroxy-3-keto-5-methylthiopentenyl-1-phosphate (HK-MTPenyl-1-P), which is then dephosphorylated to form the acireductone 1,2-dihydroxy-3-keto-5-methylthiopentene (DHK-MTPene). The chain is Enolase-phosphatase E1 from Sorangium cellulosum (strain So ce56) (Polyangium cellulosum (strain So ce56)).